The sequence spans 288 residues: tRNA dimethylallyltransferase (288 aa).

17 to 24 (GPTASGKT) is an ATP binding site. 19–24 (TASGKT) contacts substrate.

This sequence belongs to the IPP transferase family. Monomer. Mg(2+) is required as a cofactor.

The enzyme catalyses adenosine(37) in tRNA + dimethylallyl diphosphate = N(6)-dimethylallyladenosine(37) in tRNA + diphosphate. Its function is as follows. Catalyzes the transfer of a dimethylallyl group onto the adenine at position 37 in tRNAs that read codons beginning with uridine, leading to the formation of N6-(dimethylallyl)adenosine (i(6)A). This is tRNA dimethylallyltransferase from Jannaschia sp. (strain CCS1).